A 218-amino-acid chain; its full sequence is Large ribosomal subunit protein uL3 (218 aa).

Belongs to the universal ribosomal protein uL3 family. In terms of assembly, part of the 50S ribosomal subunit. Forms a cluster with proteins L14 and L19.

One of the primary rRNA binding proteins, it binds directly near the 3'-end of the 23S rRNA, where it nucleates assembly of the 50S subunit. The chain is Large ribosomal subunit protein uL3 from Mycolicibacterium gilvum (strain PYR-GCK) (Mycobacterium gilvum (strain PYR-GCK)).